A 220-amino-acid polypeptide reads, in one-letter code: Miraculin (220 aa).

The first 29 residues, 1-29 (MKELTMLSLSFFFVSALLAAAANPLLSAA), serve as a signal peptide directing secretion. An N-linked (GlcNAc...) asparagine glycan is attached at Asn-71. 3 cysteine pairs are disulfide-bonded: Cys-76/Cys-121, Cys-177/Cys-188, and Cys-181/Cys-184. Asn-215 is a glycosylation site (N-linked (GlcNAc...) asparagine).

Belongs to the protease inhibitor I3 (leguminous Kunitz-type inhibitor) family. As to quaternary structure, homotetramer; dimer of homodimer. In terms of processing, glycosylated; contains as much as 13,9% of sugars (glucosamine, mannose, galactose, xylose, and fucose). In terms of tissue distribution, expressed in fruit pulp after pollination. Not expressed in seeds, stems or leaves.

Miraculin has the property of modifying a sour taste into a sweet taste. This alteration of taste perception persists for many minutes. The protein is Miraculin of Synsepalum dulcificum (Miracle fruit).